Here is a 368-residue protein sequence, read N- to C-terminus: N-acetylneuraminate epimerase (368 aa).

A signal peptide spans Met-1–Ala-19. Kelch repeat units follow at residues Thr-40 to Asp-84, Asn-86 to Asn-137, Lys-139 to Ala-173, His-174 to Gly-219, Thr-222 to Gly-265, Glu-287 to Asn-336, and Leu-338 to Gln-367. Glu-228 acts as the Proton acceptor in catalysis.

The protein belongs to the NanM family. As to quaternary structure, homodimer.

The protein localises to the periplasm. It carries out the reaction N-acetyl-alpha-neuraminate = N-acetyl-beta-neuraminate. Its function is as follows. Converts alpha-N-acetylneuranimic acid (Neu5Ac) to the beta-anomer, accelerating the equilibrium between the alpha- and beta-anomers. Probably facilitates sialidase-negative bacteria to compete successfully for limited amounts of extracellular Neu5Ac, which is likely taken up in the beta-anomer. In addition, the rapid removal of sialic acid from solution might be advantageous to the bacterium to damp down host responses. The sequence is that of N-acetylneuraminate epimerase from Escherichia coli O157:H7.